Consider the following 182-residue polypeptide: Mitochondrial FAD-linked sulfhydryl oxidase erv1 (182 aa).

The ERV/ALR sulfhydryl oxidase domain maps to 75–177 (RLPDVAELGR…FNCQVWSKKA (103 aa)). Residues 81–87 (ELGRSTW), H91, and Y120 contribute to the FAD site. 2 cysteine pairs are disulfide-bonded: C122–C125 and C153–C170. FAD contacts are provided by residues 153–165 (CEAHNDVNERLGK) and 176–177 (KA).

It depends on FAD as a cofactor.

Its subcellular location is the mitochondrion intermembrane space. The catalysed reaction is 2 R'C(R)SH + O2 = R'C(R)S-S(R)CR' + H2O2. Functionally, FAD-dependent sulfhydryl oxidase that catalyzes disulfide bond formation. Required for the import and folding of small cysteine-containing proteins in the mitochondrial intermembrane space (IMS). The sequence is that of Mitochondrial FAD-linked sulfhydryl oxidase erv1 (erv1) from Schizosaccharomyces pombe (strain 972 / ATCC 24843) (Fission yeast).